A 261-amino-acid chain; its full sequence is Cytochrome c oxidase subunit 3 (261 aa).

The Mitochondrial matrix segment spans residues 1–15; it reads MTHQTHAYHMVNPSP. The chain crosses the membrane as a helical span at residues 16-34; sequence WPLTGALSALLMTSGLIMW. Residues 35–40 lie on the Mitochondrial intermembrane side of the membrane; the sequence is FHFNST. A helical membrane pass occupies residues 41–66; the sequence is TLLMLGLTTNMLTMYQWWRDIIREST. At 67–72 the chain is on the mitochondrial matrix side; it reads FQGHHT. A helical membrane pass occupies residues 73 to 105; sequence PSVQKGLRYGMILFIISEVLFFTGFFWAFYHSS. Residues 106–128 are Mitochondrial intermembrane-facing; the sequence is LAPTPELGGCWPPTGIHPLNPLE. The helical transmembrane segment at 129 to 152 threads the bilayer; sequence VPLLNTSVLLASGVSITWAHHSLM. The Mitochondrial matrix segment spans residues 153-155; the sequence is EGN. Residues 156–183 traverse the membrane as a helical segment; that stretch reads RNHMLQALFITIALGVYFTLLQASEYYE. At 184 to 190 the chain is on the mitochondrial intermembrane side; sequence APFTISD. The chain crosses the membrane as a helical span at residues 191 to 223; it reads GVYGSTFFVATGFHGLHVIIGSTFLIVCFFRQL. The Mitochondrial matrix segment spans residues 224 to 232; it reads KFHFTSNHH. Residues 233-256 form a helical membrane-spanning segment; sequence FGFEAAAWYWHFVDVVWLFLYVSI. Topologically, residues 257-261 are mitochondrial intermembrane; that stretch reads YWWGS.

It belongs to the cytochrome c oxidase subunit 3 family. Component of the cytochrome c oxidase (complex IV, CIV), a multisubunit enzyme composed of 14 subunits. The complex is composed of a catalytic core of 3 subunits MT-CO1, MT-CO2 and MT-CO3, encoded in the mitochondrial DNA, and 11 supernumerary subunits COX4I, COX5A, COX5B, COX6A, COX6B, COX6C, COX7A, COX7B, COX7C, COX8 and NDUFA4, which are encoded in the nuclear genome. The complex exists as a monomer or a dimer and forms supercomplexes (SCs) in the inner mitochondrial membrane with NADH-ubiquinone oxidoreductase (complex I, CI) and ubiquinol-cytochrome c oxidoreductase (cytochrome b-c1 complex, complex III, CIII), resulting in different assemblies (supercomplex SCI(1)III(2)IV(1) and megacomplex MCI(2)III(2)IV(2)).

Its subcellular location is the mitochondrion inner membrane. It carries out the reaction 4 Fe(II)-[cytochrome c] + O2 + 8 H(+)(in) = 4 Fe(III)-[cytochrome c] + 2 H2O + 4 H(+)(out). Its function is as follows. Component of the cytochrome c oxidase, the last enzyme in the mitochondrial electron transport chain which drives oxidative phosphorylation. The respiratory chain contains 3 multisubunit complexes succinate dehydrogenase (complex II, CII), ubiquinol-cytochrome c oxidoreductase (cytochrome b-c1 complex, complex III, CIII) and cytochrome c oxidase (complex IV, CIV), that cooperate to transfer electrons derived from NADH and succinate to molecular oxygen, creating an electrochemical gradient over the inner membrane that drives transmembrane transport and the ATP synthase. Cytochrome c oxidase is the component of the respiratory chain that catalyzes the reduction of oxygen to water. Electrons originating from reduced cytochrome c in the intermembrane space (IMS) are transferred via the dinuclear copper A center (CU(A)) of subunit 2 and heme A of subunit 1 to the active site in subunit 1, a binuclear center (BNC) formed by heme A3 and copper B (CU(B)). The BNC reduces molecular oxygen to 2 water molecules using 4 electrons from cytochrome c in the IMS and 4 protons from the mitochondrial matrix. The protein is Cytochrome c oxidase subunit 3 (MT-CO3) of Pelea capreolus (Gray rhebok).